The primary structure comprises 260 residues: HTH-type transcriptional repressor NanR (260 aa).

Positions 27 to 95 (KKLSEMVEEE…NGERARVSRP (69 aa)) constitute an HTH gntR-type domain. A DNA-binding region (H-T-H motif) is located at residues 55-74 (ERELMAFFNVGRPSVREALA).

It belongs to the NanR family.

In terms of biological role, transcriptional repressor that controls expression of the genes required for the catabolism of sialic acids. In Citrobacter rodentium (strain ICC168) (Citrobacter freundii biotype 4280), this protein is HTH-type transcriptional repressor NanR.